Consider the following 519-residue polypeptide: Cytochrome P450 4A22 (519 aa).

A propeptide spanning residues 1-4 (MSVS) is cleaved from the precursor. Glu-321 serves as a coordination point for heme. At Ser-440 the chain carries Phosphoserine. Cys-457 contributes to the heme binding site.

It belongs to the cytochrome P450 family.

It localises to the endoplasmic reticulum membrane. The protein resides in the microsome membrane. It catalyses the reaction an omega-methyl-long-chain fatty acid + reduced [NADPH--hemoprotein reductase] + O2 = an omega-hydroxy-long-chain fatty acid + oxidized [NADPH--hemoprotein reductase] + H2O + H(+). Functionally, catalyzes the omega- and (omega-1)-hydroxylation of various fatty acids such as laurate and palmitate. Shows no activity towards arachidonic acid and prostaglandin A1. Lacks functional activity in the kidney and does not contribute to renal 20-hydroxyeicosatetraenoic acid (20-HETE) biosynthesis. This chain is Cytochrome P450 4A22 (CYP4A22), found in Homo sapiens (Human).